A 43-amino-acid polypeptide reads, in one-letter code: Protein PsbN (43 aa).

The helical transmembrane segment at 4–24 (ATIIVIFVSSLLVGITAYSVY) threads the bilayer.

This sequence belongs to the PsbN family.

The protein localises to the plastid. The protein resides in the chloroplast thylakoid membrane. Functionally, may play a role in photosystem I and II biogenesis. This Thalassiosira pseudonana (Marine diatom) protein is Protein PsbN.